The following is a 621-amino-acid chain: Elongation factor 4 (621 aa).

The tr-type G domain maps to 21 to 203; sequence DLIRNICIIA…AIVKRVPPPK (183 aa). Residues 33–38 and 150–153 contribute to the GTP site; these read DHGKTT and NKID.

Belongs to the TRAFAC class translation factor GTPase superfamily. Classic translation factor GTPase family. LepA subfamily.

The protein resides in the cell inner membrane. It catalyses the reaction GTP + H2O = GDP + phosphate + H(+). In terms of biological role, required for accurate and efficient protein synthesis under certain stress conditions. May act as a fidelity factor of the translation reaction, by catalyzing a one-codon backward translocation of tRNAs on improperly translocated ribosomes. Back-translocation proceeds from a post-translocation (POST) complex to a pre-translocation (PRE) complex, thus giving elongation factor G a second chance to translocate the tRNAs correctly. Binds to ribosomes in a GTP-dependent manner. This Thermotoga maritima (strain ATCC 43589 / DSM 3109 / JCM 10099 / NBRC 100826 / MSB8) protein is Elongation factor 4.